Reading from the N-terminus, the 220-residue chain is Putative cobalt transport protein CbiM (220 aa).

5 helical membrane-spanning segments follow: residues 6–26 (GFLP…IVVY), 43–63 (ALVA…FPSV), 74–94 (GLLV…IVLL), 98–118 (LLLA…MGII), and 182–202 (IFTL…AAVI).

It belongs to the CbiM family. As to quaternary structure, forms an energy-coupling factor (ECF) transporter complex composed of an ATP-binding protein (A component, CbiO), a transmembrane protein (T component, CbiQ) and 2 possible substrate-capture proteins (S components, CbiM and CbiN) of unknown stoichimetry.

It localises to the cell membrane. It participates in cofactor biosynthesis; adenosylcobalamin biosynthesis. In terms of biological role, part of the energy-coupling factor (ECF) transporter complex CbiMNOQ involved in cobalt import. The chain is Putative cobalt transport protein CbiM from Haloquadratum walsbyi (strain DSM 16790 / HBSQ001).